The following is a 186-amino-acid chain: Protein GrpE (186 aa).

Residues 1-15 (MADEQQTLDQQTPEQ) are compositionally biased toward polar residues. The segment at 1 to 20 (MADEQQTLDQQTPEQPTGAA) is disordered.

This sequence belongs to the GrpE family. In terms of assembly, homodimer.

The protein resides in the cytoplasm. Functionally, participates actively in the response to hyperosmotic and heat shock by preventing the aggregation of stress-denatured proteins, in association with DnaK and GrpE. It is the nucleotide exchange factor for DnaK and may function as a thermosensor. Unfolded proteins bind initially to DnaJ; upon interaction with the DnaJ-bound protein, DnaK hydrolyzes its bound ATP, resulting in the formation of a stable complex. GrpE releases ADP from DnaK; ATP binding to DnaK triggers the release of the substrate protein, thus completing the reaction cycle. Several rounds of ATP-dependent interactions between DnaJ, DnaK and GrpE are required for fully efficient folding. The chain is Protein GrpE from Pseudomonas aeruginosa (strain UCBPP-PA14).